Reading from the N-terminus, the 25-residue chain is FLGALLKIGAKLLPSVVGLFKKKQQ.

Belongs to the non-disulfide-bridged peptide (NDBP) superfamily. Medium-length antimicrobial peptide (group 3) family. Ponericin-W subfamily. Expressed by the venom gland.

Its subcellular location is the secreted. The protein resides in the target cell membrane. In terms of biological role, membrane-perturbating peptide with multiple activities. It is insecticidal, since it induces reversible paralysis in insects (L.cuprina) after 1 hour, but fails to kill flies. It shows a relatively strong and broad-spectrum antibacterial activity against both Gram-positive and Gram-negative bacteria (MIC&lt;20 uM). It is also anthelmintic, since it potently inhibits the larval development of the major pathogenic nematode of ruminants (H.contortus, IC(50)=2.8 uM). Interestingly, only at 10 uM, it increases adult males motility of the other nematode B.malayi for 24 hours post-treatment, followed by a reduction in motility for the rest of the experiment. It shows cytotoxic activity against HEK293 cells (EC(50)=4-6 uM) and induces hemolysis in human erythrocytes (EC(50)=40-62 uM). In addition, it causes an important increase in intracellular calcium concentration on neuronal and epithelial cell lines, which supports a non-specific membrane perturbation mechanism of action. In vivo, it induces pain by intraplantar injection into mice, suggesting a defensive function against vertebrate predators. The sequence is that of M-poneritoxin-Na1b from Neoponera apicalis (Ant).